The primary structure comprises 699 residues: UvrABC system protein B (699 aa).

The Helicase ATP-binding domain maps to 35–188 (ERINNGEKDV…DHLLRKFVSM (154 aa)). 48-55 (GATGTGKS) serves as a coordination point for ATP. The Beta-hairpin signature appears at 101–124 (YYDYYQPEAYVAQTDTFIEKDSSI). The Helicase C-terminal domain maps to 438–604 (QIDDLLGEIR…PLRKKIADIT (167 aa)). In terms of domain architecture, UVR spans 654–689 (VGLIEQLTEQMHGAAAELQFEVAARIRDEVKELKRE).

This sequence belongs to the UvrB family. As to quaternary structure, forms a heterotetramer with UvrA during the search for lesions. Interacts with UvrC in an incision complex.

It is found in the cytoplasm. Its function is as follows. The UvrABC repair system catalyzes the recognition and processing of DNA lesions. A damage recognition complex composed of 2 UvrA and 2 UvrB subunits scans DNA for abnormalities. Upon binding of the UvrA(2)B(2) complex to a putative damaged site, the DNA wraps around one UvrB monomer. DNA wrap is dependent on ATP binding by UvrB and probably causes local melting of the DNA helix, facilitating insertion of UvrB beta-hairpin between the DNA strands. Then UvrB probes one DNA strand for the presence of a lesion. If a lesion is found the UvrA subunits dissociate and the UvrB-DNA preincision complex is formed. This complex is subsequently bound by UvrC and the second UvrB is released. If no lesion is found, the DNA wraps around the other UvrB subunit that will check the other stand for damage. The protein is UvrABC system protein B of Paenarthrobacter aurescens (strain TC1).